We begin with the raw amino-acid sequence, 356 residues long: Protein RecA (356 aa).

79 to 86 (GPESSGKT) provides a ligand contact to ATP.

The protein belongs to the RecA family.

It localises to the cytoplasm. Can catalyze the hydrolysis of ATP in the presence of single-stranded DNA, the ATP-dependent uptake of single-stranded DNA by duplex DNA, and the ATP-dependent hybridization of homologous single-stranded DNAs. It interacts with LexA causing its activation and leading to its autocatalytic cleavage. This Borrelia hermsii (strain HS1 / DAH) protein is Protein RecA.